A 132-amino-acid polypeptide reads, in one-letter code: Small ribosomal subunit protein uS11 (132 aa).

It belongs to the universal ribosomal protein uS11 family. As to quaternary structure, part of the 30S ribosomal subunit.

Located on the platform of the 30S subunit. This is Small ribosomal subunit protein uS11 (rps11) from Korarchaeum cryptofilum (strain OPF8).